Here is a 365-residue protein sequence, read N- to C-terminus: Chorismate synthase (365 aa).

NADP(+) is bound by residues Arg-48 and Arg-54. FMN contacts are provided by residues Arg-131–Ser-133, Asn-243–Ala-244, Gly-288, Lys-303–Ser-307, and Arg-329.

This sequence belongs to the chorismate synthase family. In terms of assembly, homotetramer. It depends on FMNH2 as a cofactor.

The catalysed reaction is 5-O-(1-carboxyvinyl)-3-phosphoshikimate = chorismate + phosphate. Its pathway is metabolic intermediate biosynthesis; chorismate biosynthesis; chorismate from D-erythrose 4-phosphate and phosphoenolpyruvate: step 7/7. In terms of biological role, catalyzes the anti-1,4-elimination of the C-3 phosphate and the C-6 proR hydrogen from 5-enolpyruvylshikimate-3-phosphate (EPSP) to yield chorismate, which is the branch point compound that serves as the starting substrate for the three terminal pathways of aromatic amino acid biosynthesis. This reaction introduces a second double bond into the aromatic ring system. This Agrobacterium fabrum (strain C58 / ATCC 33970) (Agrobacterium tumefaciens (strain C58)) protein is Chorismate synthase.